The following is an 82-amino-acid chain: uncharacterized protein (82 aa).

This is an uncharacterized protein from Lactococcus lactis subsp. lactis (Streptococcus lactis).